Reading from the N-terminus, the 1131-residue chain is MASNSRHTQSQSTGSNNRRSSTNTNTTTNKATAMAQYNSDARLLQVFEQSGESGKSFDYTRSIQVHNRAVPEQQITAYLSRIQRGGRIQPFGCVLAVEETTFRIIAYSENEEMLDLGAQSVPSMEKPQQDVLTIGTDVRTLFTAASAHSLEKAAVAQEISLMNPIWVHCKNSRKPFYAIVHRIDVGMVIDLEPLRTGDAFMSAAGAVQSQKLAVRAISRLQSLPCGDVGLLCDTVVENVRELTGYDRVMVYKFHEDEHGEVVAEIRRSDLEPYLGLHYPATDIPQASRFLFMQNRVRMICDCMATPVKVIQSEELMQPLCLVGSTPSAPHGCHAQYMANMGSIRSLLMAVIINGNDDEGGGSGRNSMKLWGLVVCHHTSPRAVPFPLRYACEFLMQALGLQLNMELQLAAQLTEKHILRTQTLLCDMLLRDAPMGIVTQSPSIKDLVKCDGAALYYGGMCWMLGVTPTEAQIKDIADWLLEHHGDSTGLSTDSLADAGYPGAASLGDAVCGMASARITSKDFLFWFRSHTAKEMKWGGAKHHPDDKDDARRMHPRSSFKAFLEVVKRRSLPWDNVEIDAIHSLQLILRCSFRDIDDSGTKTMVHSRLNYLRLQGIDELSSVASEMVRLIETATAPILAVDYNGLVNGWNAKVAELTGLPVGEAMGMSLVQDLVFEQSVERVEKMLHNALRGEEEKNVEMMLKTFGPQKEKEAVILVVNACSSRDFTDNIVGVCFVGQDVTSQKVVMDKFIRIQGDYRSIVQSPNPLIPPIFASDEYACCSEWNAAMEKVTGWTHDEVIGKMLVGEIFGGCCRLKGQDAVTKFTIVLHQCNHGQEIEKFPFAFFDKQGKYVEALLTANKRTDADGRITGSFCFFRIASSELQHALEVQRQQEKKCFARLKELAYIRQEIKNPLYGMMFTRKLLEETDLSDDQKQFVETSAVCERQMQKVMDDMDLESLEDGYMELDTAEFILGTVIDAVVSQGMIVLREKGLQLIREIPGEVKTMRLYGDEVKIQQILADFLLNVLRFTPSPEGWVAIKVFPTLKQLGGGLHVVHLEFRITHPGLGLPAELVQDLFDRSQWATQEGVGLSMCRKLLKLMNGDVRYIRESGICYFLVNVEFPMAQREDAASIK.

Positions 1–30 are disordered; sequence MASNSRHTQSQSTGSNNRRSSTNTNTTTNK. The segment covering 9–29 has biased composition (low complexity); it reads QSQSTGSNNRRSSTNTNTTTN. In terms of domain architecture, GAF spans 227 to 406; the sequence is DVGLLCDTVV…ALGLQLNMEL (180 aa). Phytochromobilin is bound at residue Cys332. 2 PAS domains span residues 621 to 692 and 755 to 826; these read VASE…LRGE and DYRS…TIVL. Positions 903–1123 constitute a Histidine kinase domain; the sequence is YIRQEIKNPL…LVNVEFPMAQ (221 aa).

It belongs to the phytochrome family. As to quaternary structure, homodimer. In terms of processing, contains one covalently linked phytochromobilin chromophore.

In terms of biological role, regulatory photoreceptor which exists in two forms that are reversibly interconvertible by light: the Pr form that absorbs maximally in the red region of the spectrum and the Pfr form that absorbs maximally in the far-red region. Photoconversion of Pr to Pfr induces an array of morphogenic responses, whereas reconversion of Pfr to Pr cancels the induction of those responses. Pfr controls the expression of a number of nuclear genes including those encoding the small subunit of ribulose-bisphosphate carboxylase, chlorophyll A/B binding protein, protochlorophyllide reductase, rRNA, etc. It also controls the expression of its own gene(s) in a negative feedback fashion. In Pinus sylvestris (Scotch pine), this protein is Phytochrome.